A 76-amino-acid chain; its full sequence is Small ribosomal subunit protein bS16 (76 aa).

This sequence belongs to the bacterial ribosomal protein bS16 family.

The polypeptide is Small ribosomal subunit protein bS16 (Helicobacter pylori (strain P12)).